The primary structure comprises 392 residues: D-amino-acid oxidase 2 (392 aa).

The FAD site is built by S10, I13, R33, D34, A45, S46, G50, and N52. The anthranilate site is built by F56, Y245, Y262, and R311. Positions 245, 262, and 311 each coordinate (R)-lactate. The FAD site is built by R311, G361, S362, G364, and Q366. S362 provides a ligand contact to anthranilate. S362 lines the (R)-lactate pocket. The short motif at 390-392 (AKL) is the Microbody targeting signal element.

The protein belongs to the DAMOX/DASOX family. FAD serves as cofactor.

The protein localises to the peroxisome matrix. It catalyses the reaction a D-alpha-amino acid + O2 + H2O = a 2-oxocarboxylate + H2O2 + NH4(+). It carries out the reaction D-methionine + O2 + H2O = 4-methylsulfanyl-2-oxobutanoate + H2O2 + NH4(+). The catalysed reaction is D-serine + O2 + H2O = 3-hydroxypyruvate + H2O2 + NH4(+). The enzyme catalyses D-histidine + O2 + H2O = 3-(imidazol-5-yl)pyruvate + H2O2 + NH4(+). It catalyses the reaction D-proline + O2 = 1-pyrroline-2-carboxylate + H2O2. It carries out the reaction D-alanine + O2 + H2O = pyruvate + H2O2 + NH4(+). The catalysed reaction is D-leucine + O2 + H2O = 4-methyl-2-oxopentanoate + H2O2 + NH4(+). The enzyme catalyses D-valine + O2 + H2O = 3-methyl-2-oxobutanoate + H2O2 + NH4(+). Catalyzes the oxidative deamination of D-amino acids with broad substrate specificity. Enables the organism to utilize D-amino acids as a source of nutrients. Enables the organism to utilize D-alanine, D-cysteine, D-histidine, D-leucine, D-methionine, D-phenylalanine, D-proline, D-serine, D-threonine, D-aspartate and D-valine as a nitrogen source and may also contribute to utlization of D-tryptophan, D-tyrosine and D-asparagine as a nitrogen source. Protects the organism from the toxicity of D-amino acids, including from D-alanine. May play a role in its interaction with the host. The sequence is that of D-amino-acid oxidase 2 from Cryptococcus deuterogattii (strain R265) (Cryptococcus gattii VGII (strain R265)).